We begin with the raw amino-acid sequence, 321 residues long: Cytochrome f (321 aa).

Residues 1–38 (MINLFLLKYKTAFSTFLKPFAYLSLILSVCFYSIQAQA) form the signal peptide. Heme-binding residues include Phe-39, Cys-59, Cys-62, and His-63. A helical transmembrane segment spans residues 287 to 306 (VKGLIAFFFTVILAQILLVL).

It belongs to the cytochrome f family. In terms of assembly, the 4 large subunits of the cytochrome b6-f complex are cytochrome b6, subunit IV (17 kDa polypeptide, petD), cytochrome f and the Rieske protein, while the 4 small subunits are PetG, PetL, PetM and PetN. The complex functions as a dimer. Requires heme as cofactor.

It is found in the plastid. It localises to the chloroplast thylakoid membrane. Functionally, component of the cytochrome b6-f complex, which mediates electron transfer between photosystem II (PSII) and photosystem I (PSI), cyclic electron flow around PSI, and state transitions. The protein is Cytochrome f (petA) of Guillardia theta (Cryptophyte).